The primary structure comprises 1043 residues: MAGNDWVNSYLEAILDVGQGLDDARSSPSLLLRERGRFTPSRYFVEEVITGYDETDLHRSWVKAVATRSPQERNTRLENMCWRIWNLARQKKQHEEKEAQRLAKRRLEREKGRREATADMSEEFSEGEKGDIISDISTHGESTKPRLPRINSAESMELWASQQKGNKLYLVLISLHGLIRGENMELGRDSDTGGQVKYVVELARALGSMPGVYRVDLLTRQVSSPDVDYSYGEPTEMLTPRDSEDFSDEMGESSGAYIVRIPFGPKDKYIPKELLWPHIPEFVDGAMSHIMQMSNVLGEQVGVGKPIWPSAIHGHYADAGDATALLSGALNVPMLLTGHSLGRDKLEQLLRQGRLSKEEINSTYKIMRRIEGEELSLDVSEMVITSTRQEIDEQWRLYDGFDPILERKLRARIKRNVSCYGRFMPRMVKIPPGMEFNHIVPHGGDMEDTDGNEEHPTSPDPPIWAEIMRFFSNSRKPMILALARPDPKKNITTLVKAFGECRPLRELANLALIMGNRDGIDEMSSTSSSVLLSVLKLIDKYDLYGQVAYPKHHKQSDVPDIYRLAAKSKGVFINPAIIEPFGLTLIEAAAHGLPMVATKNGGPVDIHRVLDNGLLVDPHDQQSISEALLKLVADKHLWAKCRQNGLKNIHQFSWPEHCKTYLSRITSFKPRHPQWQSDDGGDNSEPESPSDSLRDIQDISLNLKFSFDGSGNDNYMNQEGSSMDRKSKIEAAVQNWSKGKDSRKMGSLERSEVNSGKFPAVRRRKFIVVIALDFDGEEDTLEATKRILDAVEKERAEGSVGFILSTSLTISEVQSFLVSGGLNPNDFDAFICNSGSDLHYTSLNNEDGPFVVDFYYHSHIEYRWGGEGLRKTLIRWASSLNEKKADNDEQIVTLAEHLSTDYCYTFTVKKPAAVPPVRELRKLLRIQALRCHVVYSQNGTRINVIPVLASRIQALRYLFVRWGIDMAKMAVFVGESGDTDYEGLLGGLHKSVVLKGVSCSACLHANRSYPLTDVISFESNNVVHASPDSDVRDALKKLELLKD.

Over residues 95–117 (EEKEAQRLAKRRLEREKGRREAT) the composition is skewed to basic and acidic residues. The disordered stretch occupies residues 95 to 127 (EEKEAQRLAKRRLEREKGRREATADMSEEFSEG). Phosphoserine occurs at positions 121, 125, 152, and 155. The segment at 670 to 693 (PRHPQWQSDDGGDNSEPESPSDSL) is disordered.

It belongs to the glycosyltransferase 1 family. Homodimer or homotetramer. Post-translationally, phosphorylated at Ser-152 upon sucrose supply. In terms of tissue distribution, expressed in seeds, stems, rosette leaves, flowers and siliques. Highly expressed in maturing nectaries.

The enzyme catalyses beta-D-fructose 6-phosphate + UDP-alpha-D-glucose = sucrose 6(F)-phosphate + UDP + H(+). It functions in the pathway glycan biosynthesis; sucrose biosynthesis; sucrose from D-fructose 6-phosphate and UDP-alpha-D-glucose: step 1/2. With respect to regulation, activity is regulated by phosphorylation and moderated by concentration of metabolites and light. Functionally, plays a major role in photosynthetic sucrose synthesis by catalyzing the rate-limiting step of sucrose biosynthesis from UDP-glucose and fructose- 6-phosphate. Involved in the regulation of carbon partitioning in the leaves of plants. May regulate the synthesis of sucrose and therefore play a major role as a limiting factor in the export of photoassimilates out of the leaf. Plays a role for sucrose availability that is essential for plant growth and fiber elongation. Required for nectar secretion. This Arabidopsis thaliana (Mouse-ear cress) protein is Sucrose-phosphate synthase 1 (SPS1).